The sequence spans 381 residues: Carboxylesterase 5A (381 aa).

The Acyl-ester intermediate role is filled by Ser108. Cys162 and Cys173 are joined by a disulfide. An N-linked (GlcNAc...) asparagine glycan is attached at Asn163. Glu227 serves as the catalytic Charge relay system. Asn245 is a glycosylation site (N-linked (GlcNAc...) asparagine). His336 functions as the Charge relay system in the catalytic mechanism.

Belongs to the type-B carboxylesterase/lipase family. As to quaternary structure, component of a epididymal complex at least composed of soluble form of prion protein PRNP, CLU, BPI, CES5A, MANBA and GLB1. In terms of processing, N-glycosylated. As to expression, detected in corpus and cauda epididymal fluid. Present in seminal fluid but not found to be associated with sperm (at protein level). Not expressed in other tissues.

The protein resides in the secreted. It carries out the reaction a carboxylic ester + H2O = an alcohol + a carboxylate + H(+). Functionally, involved in the detoxification of xenobiotics and in the activation of ester and amide prodrugs. The chain is Carboxylesterase 5A (CES5A) from Ovis aries (Sheep).